A 159-amino-acid polypeptide reads, in one-letter code: Phosphopantetheine adenylyltransferase (159 aa).

T10 provides a ligand contact to substrate. ATP contacts are provided by residues 10-11 and H18; that span reads TF. Substrate-binding residues include K42, M74, and R88. ATP is bound by residues 89 to 91, E99, and 124 to 130; these read GLR and WSFISSS.

This sequence belongs to the bacterial CoaD family. Homohexamer. Mg(2+) serves as cofactor.

The protein resides in the cytoplasm. It catalyses the reaction (R)-4'-phosphopantetheine + ATP + H(+) = 3'-dephospho-CoA + diphosphate. It functions in the pathway cofactor biosynthesis; coenzyme A biosynthesis; CoA from (R)-pantothenate: step 4/5. Reversibly transfers an adenylyl group from ATP to 4'-phosphopantetheine, yielding dephospho-CoA (dPCoA) and pyrophosphate. This is Phosphopantetheine adenylyltransferase from Cronobacter sakazakii (strain ATCC BAA-894) (Enterobacter sakazakii).